The sequence spans 84 residues: U4-theraphotoxin-Hhn1n (84 aa).

An N-terminal signal peptide occupies residues 1 to 22 (MKVTLIAILTCAAVLVLHTTAA). A propeptide spanning residues 23–47 (EELEESQLMEVGMPDTELAAVDEER) is cleaved from the precursor. Intrachain disulfides connect C51/C65, C55/C76, and C70/C81.

The protein belongs to the neurotoxin 12 (Hwtx-2) family. 02 (Hwtx-2) subfamily. In terms of tissue distribution, expressed by the venom gland.

It localises to the secreted. Its function is as follows. Postsynaptic neurotoxin. In Cyriopagopus hainanus (Chinese bird spider), this protein is U4-theraphotoxin-Hhn1n.